A 101-amino-acid chain; its full sequence is Urease subunit gamma (101 aa).

Belongs to the urease gamma subunit family. In terms of assembly, heterotrimer of UreA (gamma), UreB (beta) and UreC (alpha) subunits. Three heterotrimers associate to form the active enzyme.

It localises to the cytoplasm. It catalyses the reaction urea + 2 H2O + H(+) = hydrogencarbonate + 2 NH4(+). Its pathway is nitrogen metabolism; urea degradation; CO(2) and NH(3) from urea (urease route): step 1/1. In Ureaplasma parvum serovar 3 (strain ATCC 27815 / 27 / NCTC 11736), this protein is Urease subunit gamma.